We begin with the raw amino-acid sequence, 439 residues long: MRLSRFFLPILKETPKEAEIVSHRLMLRAGMIRQEAAGIYAWLPLGLRVLKKIEAIVREEQNRAGAIELLMPTLQLADLWRESGRYDAYGPEMLRIQDRHKRELLYGPTNEEMITEIFRGYIRSYKSLPLNLYHIQWKFRDEQRPRFGVMRGREFLMKDAYSFDIDEAGARRSYNRMFVAYLRTFARMGLKAIPMRAETGPIGGDLSHEFIVLAETGESGVYIDKDVLDLPIPGTEVDYDGDLTPIVRQWTTAYAATEDVHDGPRYEREVPEERRVHTRGIEVGQIFYFGTKYSESMKALVTGTDGVEQPIHGGSYGVGVSRLVGAIIEACHDEAGIKWPEAVAPFTVAILNLKQGASDTDEACERIYRELSARGVDVLYDDTDQRAGAKFATADLIGSPWQVMVGPKGLAEGKVEIKRRGDGSRENVALEDAVARLMA.

This sequence belongs to the class-II aminoacyl-tRNA synthetase family. ProS type 2 subfamily. As to quaternary structure, homodimer.

The protein localises to the cytoplasm. It carries out the reaction tRNA(Pro) + L-proline + ATP = L-prolyl-tRNA(Pro) + AMP + diphosphate. Catalyzes the attachment of proline to tRNA(Pro) in a two-step reaction: proline is first activated by ATP to form Pro-AMP and then transferred to the acceptor end of tRNA(Pro). The sequence is that of Proline--tRNA ligase from Nitrobacter winogradskyi (strain ATCC 25391 / DSM 10237 / CIP 104748 / NCIMB 11846 / Nb-255).